The following is a 33-amino-acid chain: Brevinin-2Ea (33 aa).

A disulfide bridge links cysteine 27 with cysteine 33.

This sequence belongs to the frog skin active peptide (FSAP) family. Brevinin subfamily. Expressed by the skin glands.

The protein localises to the secreted. Shows antibacterial activity against representative Gram-negative and Gram-positive bacterial species, and hemolytic activity. This chain is Brevinin-2Ea, found in Pelophylax lessonae (Pool frog).